A 286-amino-acid polypeptide reads, in one-letter code: Transcription initiation factor IIA large subunit (286 aa).

3 disordered regions span residues 120-145 (NTVE…ADVT), 167-195 (TVEN…KEKE), and 208-236 (KRSA…EGEE). The segment covering 175–195 (SEKKDDEEKEEDVEKTRKEKE) has biased composition (basic and acidic residues). Residues 214-236 (DTDEVGSELDDSDDDYLISEGEE) show a composition bias toward acidic residues.

It belongs to the TFIIA subunit 1 family. As to quaternary structure, TFIIA is a heterodimer composed of the large TOA1 and a small TOA2 subunits. Interacts with KAP122.

It localises to the cytoplasm. Its subcellular location is the nucleus. TFIIA is a component of the transcription machinery of RNA polymerase II and implicated in the regulation of basal transcription. Interacts with TBP (the TATA-binding protein). This is Transcription initiation factor IIA large subunit (TOA1) from Saccharomyces cerevisiae (strain ATCC 204508 / S288c) (Baker's yeast).